The following is a 206-amino-acid chain: MDLKDCKIYLVTDEKACNGKDFYKCIEESIKGGVKIVQLREKNISTKDFYKKALKVKEICKNYEVLFIINDRLDITQAVEADGVHLGQSDMPIEKAREILKDKFLIGATARNIEEAEKAQLLGADYIGSGAIFGTSTKDNAKRLEMEDLKKIVNSVKIPVFAIGGININNVWMLKNIGLQGVCSVSGILSEKDCKKAVENILKNFN.

Residues 38–42 and N70 each bind 4-amino-2-methyl-5-(diphosphooxymethyl)pyrimidine; that span reads QLREK. Mg(2+)-binding residues include D71 and D90. Residue T109 participates in 4-amino-2-methyl-5-(diphosphooxymethyl)pyrimidine binding. 135–137 lines the 2-[(2R,5Z)-2-carboxy-4-methylthiazol-5(2H)-ylidene]ethyl phosphate pocket; that stretch reads TST. Residue K138 coordinates 4-amino-2-methyl-5-(diphosphooxymethyl)pyrimidine. 2-[(2R,5Z)-2-carboxy-4-methylthiazol-5(2H)-ylidene]ethyl phosphate is bound by residues G165 and 185–186; that span reads VS.

This sequence belongs to the thiamine-phosphate synthase family. It depends on Mg(2+) as a cofactor.

It catalyses the reaction 2-[(2R,5Z)-2-carboxy-4-methylthiazol-5(2H)-ylidene]ethyl phosphate + 4-amino-2-methyl-5-(diphosphooxymethyl)pyrimidine + 2 H(+) = thiamine phosphate + CO2 + diphosphate. The enzyme catalyses 2-(2-carboxy-4-methylthiazol-5-yl)ethyl phosphate + 4-amino-2-methyl-5-(diphosphooxymethyl)pyrimidine + 2 H(+) = thiamine phosphate + CO2 + diphosphate. The catalysed reaction is 4-methyl-5-(2-phosphooxyethyl)-thiazole + 4-amino-2-methyl-5-(diphosphooxymethyl)pyrimidine + H(+) = thiamine phosphate + diphosphate. It functions in the pathway cofactor biosynthesis; thiamine diphosphate biosynthesis; thiamine phosphate from 4-amino-2-methyl-5-diphosphomethylpyrimidine and 4-methyl-5-(2-phosphoethyl)-thiazole: step 1/1. Condenses 4-methyl-5-(beta-hydroxyethyl)thiazole monophosphate (THZ-P) and 2-methyl-4-amino-5-hydroxymethyl pyrimidine pyrophosphate (HMP-PP) to form thiamine monophosphate (TMP). In Fusobacterium nucleatum subsp. nucleatum (strain ATCC 25586 / DSM 15643 / BCRC 10681 / CIP 101130 / JCM 8532 / KCTC 2640 / LMG 13131 / VPI 4355), this protein is Thiamine-phosphate synthase.